A 65-amino-acid polypeptide reads, in one-letter code: Putative beta-neurotoxin RjAa2 (65 aa).

The LCN-type CS-alpha/beta domain occupies 1–64 (KEGYPMGRDG…VWDSSTNKCG (64 aa)). 4 disulfides stabilise this stretch: cysteine 11–cysteine 63, cysteine 15–cysteine 37, cysteine 22–cysteine 44, and cysteine 26–cysteine 46.

This sequence belongs to the long (4 C-C) scorpion toxin superfamily. Sodium channel inhibitor family. Beta subfamily. As to expression, expressed by the venom gland.

The protein resides in the secreted. Functionally, beta toxins bind voltage-independently at site-4 of sodium channels (Nav) and shift the voltage of activation toward more negative potentials thereby affecting sodium channel activation and promoting spontaneous and repetitive firing. The protein is Putative beta-neurotoxin RjAa2 of Rhopalurus junceus (Caribbean blue scorpion).